The following is a 240-amino-acid chain: Probable transcriptional regulatory protein Nmul_A2722 (240 aa).

It belongs to the TACO1 family.

Its subcellular location is the cytoplasm. This chain is Probable transcriptional regulatory protein Nmul_A2722, found in Nitrosospira multiformis (strain ATCC 25196 / NCIMB 11849 / C 71).